We begin with the raw amino-acid sequence, 179 residues long: MYKFLVFSSVLVLFFAQASCQRFIQPTFRPPPTQRPITRTVRQAGQEPLWLYQGDNVPRAPSTADHPILPSKIDDVQLDPNRRYVRSVTNPENNEASIEHSHHTVDIGLDQPIESHRNTRDLRFLYPRGKLPVPTLPPFNPKPIYIDMGNRYRRHASEDQEELRQYNEHFLIPRDIFQE.

An N-terminal signal peptide occupies residues 1–16; the sequence is MYKFLVFSSVLVLFFA. Residues 17 to 120 constitute a propeptide that is removed on maturation; the sequence is QASCQRFIQP…QPIESHRNTR (104 aa). An O-linked (GalNAc...) threonine glycan is attached at Thr135. Positions 153–179 are excised as a propeptide; that stretch reads RRHASEDQEELRQYNEHFLIPRDIFQE.

It belongs to the lebocin family. In terms of processing, O-glycosylation is important for the antibacterial activity of lebocin. As to expression, hemolymph. Produced in fat body.

Its subcellular location is the secreted. Functionally, antibacterial peptide. In Bombyx mori (Silk moth), this protein is Lebocin-3 (LEB3).